Here is a 231-residue protein sequence, read N- to C-terminus: Putative N-acetylmannosamine-6-phosphate 2-epimerase (231 aa).

The protein belongs to the NanE family.

The enzyme catalyses an N-acyl-D-glucosamine 6-phosphate = an N-acyl-D-mannosamine 6-phosphate. Its pathway is amino-sugar metabolism; N-acetylneuraminate degradation; D-fructose 6-phosphate from N-acetylneuraminate: step 3/5. In terms of biological role, converts N-acetylmannosamine-6-phosphate (ManNAc-6-P) to N-acetylglucosamine-6-phosphate (GlcNAc-6-P). This Latilactobacillus sakei subsp. sakei (strain 23K) (Lactobacillus sakei subsp. sakei) protein is Putative N-acetylmannosamine-6-phosphate 2-epimerase.